Here is a 479-residue protein sequence, read N- to C-terminus: Ribosomal RNA small subunit methyltransferase F (479 aa).

Residues Ala-125–Lys-131, Glu-149, Asp-176, and Asp-194 contribute to the S-adenosyl-L-methionine site. The active-site Nucleophile is the Cys-247.

This sequence belongs to the class I-like SAM-binding methyltransferase superfamily. RsmB/NOP family.

The protein resides in the cytoplasm. The enzyme catalyses cytidine(1407) in 16S rRNA + S-adenosyl-L-methionine = 5-methylcytidine(1407) in 16S rRNA + S-adenosyl-L-homocysteine + H(+). Functionally, specifically methylates the cytosine at position 1407 (m5C1407) of 16S rRNA. In Escherichia coli O127:H6 (strain E2348/69 / EPEC), this protein is Ribosomal RNA small subunit methyltransferase F.